A 94-amino-acid polypeptide reads, in one-letter code: UPF0337 protein NE2439 (94 aa).

The segment at 74–94 is disordered; that stretch reads KNVGEAVSSRQKSVKKRSLYT. Residues 85–94 show a composition bias toward basic residues; the sequence is KSVKKRSLYT.

Belongs to the UPF0337 (CsbD) family.

The protein is UPF0337 protein NE2439 of Nitrosomonas europaea (strain ATCC 19718 / CIP 103999 / KCTC 2705 / NBRC 14298).